Reading from the N-terminus, the 188-residue chain is Ribosome maturation factor RimM (188 aa).

The region spanning 93–175 is the PRC barrel domain; it reads QDEFYFTDLI…EIEVQGDLSD (83 aa).

Belongs to the RimM family. Binds ribosomal protein uS19.

The protein localises to the cytoplasm. Functionally, an accessory protein needed during the final step in the assembly of 30S ribosomal subunit, possibly for assembly of the head region. Essential for efficient processing of 16S rRNA. May be needed both before and after RbfA during the maturation of 16S rRNA. It has affinity for free ribosomal 30S subunits but not for 70S ribosomes. The sequence is that of Ribosome maturation factor RimM from Gluconacetobacter diazotrophicus (strain ATCC 49037 / DSM 5601 / CCUG 37298 / CIP 103539 / LMG 7603 / PAl5).